Here is an 827-residue protein sequence, read N- to C-terminus: NT-3 growth factor receptor (827 aa).

A signal peptide spans 1-31 (MDVSLCPTKCTFWRVFLLWSIWGDYLLSVLA). Disulfide bonds link cysteine 32–cysteine 38 and cysteine 36–cysteine 45. The Extracellular segment spans residues 32–430 (CPANCLCSKT…ITVTHKPEED (399 aa)). Residues asparagine 68, asparagine 72, and asparagine 79 are each glycosylated (N-linked (GlcNAc...) asparagine). LRR repeat units lie at residues 104–125 (GLQRLTIRNSGLRNIQPRAFAK) and 128–149 (HLRYIDLSGNRLTTLSWQLFQT). An LRRCT domain is found at 160–209 (NPFNCSCDIRWIQLWQEKGEANLQSQQLHCMNLDTAVILLRNMNITQCDL). Asparagine 163 is a glycosylation site (N-linked (GlcNAc...) asparagine). 2 cysteine pairs are disulfide-bonded: cysteine 164-cysteine 189 and cysteine 166-cysteine 207. N-linked (GlcNAc...) asparagine glycosylation is found at asparagine 203, asparagine 218, asparagine 232, asparagine 259, asparagine 267, asparagine 272, and asparagine 294. 2 Ig-like C2-type domains span residues 210–300 (PEIS…VLLT) and 319–382 (HCIA…VATN). Cysteine 231 and cysteine 284 are joined by a disulfide. Cysteine 320 and cysteine 362 are oxidised to a cystine. 2 N-linked (GlcNAc...) asparagine glycosylation sites follow: asparagine 375 and asparagine 388. A helical transmembrane segment spans residues 431 to 455 (TFGVSIAVGLAAFACVLLVVLFIMI). At 456 to 827 (NKYGRRSKFG…ATPIYLDILG (372 aa)) the chain is on the cytoplasmic side. Tyrosine 518 is subject to Phosphotyrosine; by autocatalysis. In terms of domain architecture, Protein kinase spans 540–812 (IVLKRELGEG…LNIKEIYKIL (273 aa)). Residues 546–554 (LGEGAFGKV) and lysine 574 each bind ATP. Aspartate 681 acts as the Proton acceptor in catalysis. Tyrosine 707, tyrosine 711, tyrosine 712, and tyrosine 822 each carry phosphotyrosine; by autocatalysis.

Belongs to the protein kinase superfamily. Tyr protein kinase family. Insulin receptor subfamily. As to quaternary structure, exists in a dynamic equilibrium between monomeric (low affinity) and dimeric (high affinity) structures. Interacts with PTPRS. Post-translationally, ligand-mediated auto-phosphorylation.

It localises to the membrane. The enzyme catalyses L-tyrosyl-[protein] + ATP = O-phospho-L-tyrosyl-[protein] + ADP + H(+). In terms of biological role, receptor tyrosine kinase involved in nervous system and probably heart development. Upon binding of its ligand NTF3/neurotrophin-3, NTRK3 autophosphorylates and activates different signaling pathways, including the phosphatidylinositol 3-kinase/AKT and the MAPK pathways, that control cell survival and differentiation. The KT and KD isoforms fail to stimulate transformation, process outgrowth or survival. Isoform KI25 exhibits tyrosine phosphorylation in the absence of ligand and is unable to mediate survival of neuronal cells. This chain is NT-3 growth factor receptor (NTRK3), found in Gallus gallus (Chicken).